Consider the following 338-residue polypeptide: S-adenosylmethionine:tRNA ribosyltransferase-isomerase (338 aa).

Belongs to the QueA family. As to quaternary structure, monomer.

It is found in the cytoplasm. It catalyses the reaction 7-aminomethyl-7-carbaguanosine(34) in tRNA + S-adenosyl-L-methionine = epoxyqueuosine(34) in tRNA + adenine + L-methionine + 2 H(+). It participates in tRNA modification; tRNA-queuosine biosynthesis. Its function is as follows. Transfers and isomerizes the ribose moiety from AdoMet to the 7-aminomethyl group of 7-deazaguanine (preQ1-tRNA) to give epoxyqueuosine (oQ-tRNA). This chain is S-adenosylmethionine:tRNA ribosyltransferase-isomerase, found in Francisella tularensis subsp. novicida (strain U112).